The following is a 243-amino-acid chain: Orotidine 5'-phosphate decarboxylase (243 aa).

Substrate-binding positions include Asp-12, Lys-34, 61-70 (DLKFHDIPNT), Thr-125, Arg-187, Gln-196, Gly-216, and Arg-217. Lys-63 functions as the Proton donor in the catalytic mechanism.

This sequence belongs to the OMP decarboxylase family. Type 1 subfamily. In terms of assembly, homodimer.

The enzyme catalyses orotidine 5'-phosphate + H(+) = UMP + CO2. The protein operates within pyrimidine metabolism; UMP biosynthesis via de novo pathway; UMP from orotate: step 2/2. Catalyzes the decarboxylation of orotidine 5'-monophosphate (OMP) to uridine 5'-monophosphate (UMP). The chain is Orotidine 5'-phosphate decarboxylase from Heliobacterium modesticaldum (strain ATCC 51547 / Ice1).